Reading from the N-terminus, the 510-residue chain is Putative folylpolyglutamate synthase (510 aa).

98-101 (GKGS) lines the ATP pocket. Positions 122, 189, and 217 each coordinate Mg(2+). ATP-binding residues include arginine 342 and aspartate 357.

This sequence belongs to the folylpolyglutamate synthase family. A monovalent cation is required as a cofactor.

The protein resides in the mitochondrion inner membrane. It is found in the mitochondrion matrix. The protein localises to the cytoplasm. The enzyme catalyses (6S)-5,6,7,8-tetrahydrofolyl-(gamma-L-Glu)(n) + L-glutamate + ATP = (6S)-5,6,7,8-tetrahydrofolyl-(gamma-L-Glu)(n+1) + ADP + phosphate + H(+). The protein operates within cofactor biosynthesis; tetrahydrofolylpolyglutamate biosynthesis. Functionally, catalyzes conversion of folates to polyglutamate derivatives allowing concentration of folate compounds in the cell and the intracellular retention of these cofactors, which are important substrates for most of the folate-dependent enzymes that are involved in one-carbon transfer reactions involved in purine, pyrimidine and amino acid synthesis. The protein is Putative folylpolyglutamate synthase of Caenorhabditis elegans.